A 117-amino-acid polypeptide reads, in one-letter code: Putative small ubiquitin-related modifier 6 (117 aa).

A disordered region spans residues 1 to 30; the sequence is MSTKSSSIHGRNEVKMEGEKRKDVESESTH. A compositionally biased stretch (basic and acidic residues) spans 10–28; the sequence is GRNEVKMEGEKRKDVESES. The region spanning 31-108 is the Ubiquitin-like domain; that stretch reads VTLNVKGQDE…IDALLPQESG (78 aa). A Glycyl lysine isopeptide (Gly-Lys) (interchain with K-? in acceptor proteins) cross-link involves residue glycine 108.

Belongs to the ubiquitin family. SUMO subfamily. As to quaternary structure, interacts with SAE2, SCE1, SIZ1 and MMS21 Covalently attached to a number of proteins.

Its subcellular location is the nucleus. The protein resides in the cytoplasm. Functionally, ubiquitin-like protein which can be covalently attached to target lysines as a monomer. Does not seem to be involved in protein degradation and may function as an antagonist of ubiquitin in the degradation process. In Arabidopsis thaliana (Mouse-ear cress), this protein is Putative small ubiquitin-related modifier 6 (SUMO6).